The sequence spans 1336 residues: Aldehyde oxidase 4 (1336 aa).

The 2Fe-2S ferredoxin-type domain maps to 8–95 (DELIFFVNGK…GAAITTVEGV (88 aa)). Residues C47, C52, C55, and C77 each contribute to the [2Fe-2S] cluster site. Q116 is a binding site for Mo-molybdopterin. Residues C117, C120, C152, and C154 each contribute to the [2Fe-2S] cluster site. A Mo-molybdopterin-binding site is contributed by C154. The 187-residue stretch at 237–423 (FQGKRTTWII…LSIFIPYTAQ (187 aa)) folds into the FAD-binding PCMH-type domain. FAD-binding positions include 265–272 (LVMGNTTV), A346, T355, H359, D368, and I413. Mo-molybdopterin contacts are provided by residues 804 to 805 (AF), L1045, 1086 to 1089 (GSMG), Q1201, and L1265. The active-site Proton acceptor; for azaheterocycle hydroxylase activity is E1267.

The protein belongs to the xanthine dehydrogenase family. In terms of assembly, homodimer. [2Fe-2S] cluster is required as a cofactor. It depends on FAD as a cofactor. Mo-molybdopterin serves as cofactor. As to expression, highly expressed in Harderian glands and sebaceous glands with detectable levels in the epidermis and other keratinized epithelia (at protein level). Detected in testis. The expression is 3 times greater in females than in males.

The protein localises to the cytoplasm. The enzyme catalyses an aldehyde + O2 + H2O = a carboxylate + H2O2 + H(+). It catalyses the reaction retinal + O2 + H2O = retinoate + H2O2 + H(+). It carries out the reaction all-trans-retinal + O2 + H2O = all-trans-retinoate + H2O2 + H(+). Its function is as follows. Aldehyde oxidase able to catalyze the oxidation of retinaldehyde into retinoate. Is responsible for the major all-trans-retinaldehyde-metabolizing activity in the Harderian gland, and contributes a significant amount of the same activity in the skin. Is devoid of pyridoxal-oxidizing activity, in contrast to the other aldehyde oxidases. Acts as a negative modulator of the epidermal trophism. May be able to oxidize a wide variety of aldehydes into their corresponding carboxylates and to hydroxylate azaheterocycles. The sequence is that of Aldehyde oxidase 4 (Aox4) from Mus musculus (Mouse).